We begin with the raw amino-acid sequence, 294 residues long: Peroxidase-like protein 3 (294 aa).

N129 carries an N-linked (GlcNAc...) asparagine glycan.

It belongs to the peroxidase family. In terms of tissue distribution, component of the acid-insoluble and acid-soluble organic matrix of calcified layers of the shell (at protein level).

Its subcellular location is the secreted. This Lottia gigantea (Giant owl limpet) protein is Peroxidase-like protein 3.